We begin with the raw amino-acid sequence, 716 residues long: Lamin-like protein (716 aa).

Composition is skewed to basic residues over residues 1–10 (MDMSKKKSKR) and 35–45 (KKTKTTTKKKA). Residues 1-107 (MDMSKKKSKR…TIQSIPTTPI (107 aa)) form a disordered region. The segment covering 62 to 107 (ITTTTTSTSTTNNNNITTTSTSSQQSNGTLSSSSSPTIQSIPTTPI) has biased composition (low complexity). Positions 130–450 (LREKDELSLI…KMRKQMADLK (321 aa)) form a coiled coil. An IF rod domain is found at 132–515 (EKDELSLIHN…ELVKGFEKTV (384 aa)). The short motif at 519–522 (KRKR) is the Nuclear localization signal element. The interval 519-584 (KRKRSKLQHE…PTGPEQSELF (66 aa)) is disordered. The segment covering 532–545 (AANQDQNGMTIEEQ) has biased composition (polar residues). The span at 546-564 (SSTSTTTTTSATGSSSSTS) shows a compositional bias: low complexity. Positions 565–584 (HLDNIDSSKLPTGPEQSELF) are enriched in polar residues. Residues 575–698 (PTGPEQSELF…EETTTVTLPA (124 aa)) form the LTD domain. A CAAX motif motif is present at residues 713–716 (CLIM).

Belongs to the intermediate filament family. In terms of assembly, homodimer. Lamin dimers then assemble into dimeric head-to-tail polymers. Ultimately, two head-to-tail polymers assemble laterally into a protofilament with a uniformly shaped rod of 3.5 nm in diameter.

Its subcellular location is the nucleus lamina. It is found in the nucleus envelope. The protein resides in the nucleus inner membrane. Functionally, lamins are intermediate filament proteins that assemble into a filamentous meshwork, and which constitute the major components of the nuclear lamina, a fibrous layer on the nucleoplasmic side of the inner nuclear membrane. Lamins provide a framework for the nuclear envelope, bridging the nuclear envelope and chromatin, thereby playing an important role in nuclear assembly, chromatin organization, nuclear membrane and telomere dynamics. The structural integrity of the lamina is strictly controlled by the cell cycle, as seen by the disintegration and formation of the nuclear envelope in prophase and telophase, respectively. Helps to maintain integrity of nuclear structures in response to mechanical stress. The chain is Lamin-like protein from Dictyostelium discoideum (Social amoeba).